Here is a 447-residue protein sequence, read N- to C-terminus: MEGGRAPACTTQVSFVCQRCSQPLKLDTSFKILDRLTIQELTAPPLTAAPARPGDAQEESALSEEAFTEGRQDGVSRRFIPPARMMSTESANSFTLIGEASDGGTMENLSRRLKVTGDLFDIMSGQTDVDHPLCEECTDTLLDQLDTQLNITENECQNYKRCLEILEKMNEDDKEKLQTELKELALEEEQLIQELEDVEKNRKIVAEDFERVRAEAERLEQEEAQYQKEYCEFKRQQLELDDELKSVENQMRYAQMQLDKLKKTNVFNATFHIWHSGQFGTINNFRLGRLPSVPVEWNEINAAWGQTVLLLHALANKMGLKFQRYRLVPYGNHSYLESLTDKSKELPLYCSGGLRFFWDNKFDHAMVAFLDCVQQFKEEVEKGETRFCLPYRMDVEKGKIEDTGGSGGSYSIKTQFNSEEQWTKALKFMLTNLKWGLAWVSSQFYNK.

Low complexity predominate over residues 44-53 (PPLTAAPARP). Residues 44-71 (PPLTAAPARPGDAQEESALSEEAFTEGR) are disordered. The short motif at 105–124 (TMENLSRRLKVTGDLFDIMS) is the BH3 element. The stretch at 139–266 (DTLLDQLDTQ…QLDKLKKTNV (128 aa)) forms a coiled coil. The segment at 242–447 (DELKSVENQM…AWVSSQFYNK (206 aa)) is evolutionary conserved domain (ECD). The tract at residues 422–447 (WTKALKFMLTNLKWGLAWVSSQFYNK) is required for membrane-association.

Belongs to the beclin family. As to quaternary structure, component of the PI3K (PI3KC3/PI3K-III/class III phosphatidylinositol 3-kinase) complex. Post-translationally, may be proteolytically processed by caspases; the C-terminal fragment(s) may induce apoptosis.

The protein localises to the cytoplasm. It is found in the golgi apparatus. It localises to the trans-Golgi network membrane. Its subcellular location is the endosome membrane. The protein resides in the endoplasmic reticulum membrane. The protein localises to the mitochondrion membrane. It is found in the cytoplasmic vesicle. It localises to the autophagosome. In terms of biological role, plays a central role in autophagy. Acts as core subunit of different PI3K complex forms that mediate formation of phosphatidylinositol 3-phosphate and are believed to play a role in multiple membrane trafficking pathways such as initiation of autophagosomes, maturation of autophagosomes and endocytosis. Involved in regulation of degradative endocytic trafficking and required for the abscission step in cytokinesis, probably in the context of PI3KC3-C2. This Gallus gallus (Chicken) protein is Beclin-1 (BECN1).